The chain runs to 515 residues: Acetyltransferase sphE (515 aa).

Residues His184 and Asp438 each act as proton acceptor in the active site.

The protein belongs to the plant acyltransferase family. In terms of assembly, monomer.

The catalysed reaction is sphingofungin B + acetyl-CoA = sphingofungin C + CoA. The protein operates within secondary metabolite biosynthesis. Acetyltransferase; part of the gene cluster that mediates the biosynthesis of sphingofungins, bioactive molecules acting as sphingolipid inhibitors via inhibiting serine palmitoyl transferase (SPT). Within the pathway, sphE catalyzes the O-acetylation of the C-5 hydroxyl group of sphingofungin B to produce sphingofungin C. SphE can also convert sphingofungin B1 into sphingofungin C1 and sphingofungin B2 into sphingofungin C2. Sphingofungin biosynthesis starts with the PKS sphB that produces an C18 polyketide precursor 3-hydroxyoctadeca-4,10-dienoyl-ACP containing one delta-6 desaturation and one delta-12 desaturation. The aminoacyl transferase sphA uses the sphB product to produce 3-keto-presphingofungin by adding an aminomalonate molecule. SphF then reduces the C-3 ketone of 3-keto-presphingofungin which leads to presphingofungin. The cytochrome P450 monooxygenase sphH converts presphingofungin into sphingofungin B1 which is further converted to sphingofungin B by the dioxygenase sphC. SphC is also able to convert presphingofungin into sphingofungin B2. The acetyltransferase sphE acetylates sphingofungin B to produce sphingofungin C, but can also convert sphingofungin B1 into sphingofungin C1 and sphingofungin B2 into sphingofungin C2. Finally, sphingofungin C can be spontaneously converted into sphingofungin D. The protein is Acetyltransferase sphE of Aspergillus fumigatus (strain CBS 144.89 / FGSC A1163 / CEA10) (Neosartorya fumigata).